The following is a 356-amino-acid chain: 3'-5' exonuclease (356 aa).

Residues 1 to 120 are disordered; sequence MDKYLIKMPT…TPSPEKEKPE (120 aa). 2 stretches are compositionally biased toward basic and acidic residues: residues 29–56 and 71–85; these read TIDKQKEKNTPTEKQKQEDDYVEKENTP and KNQDTPTEVKDIKNE. Positions 99 to 113 are enriched in low complexity; it reads LTRSTRSMAEEGTPS. A phosphoserine mark is found at Ser-105 and Ser-113. In terms of domain architecture, 3'-5' exonuclease spans 155-316; the sequence is TTLDVVPMAF…GQVIYRDLEQ (162 aa). Positions 165, 167, and 303 each coordinate Mg(2+).

Belongs to the WRNexo family.

The protein localises to the nucleus. In terms of biological role, has exonuclease activity on both single-stranded and duplex templates bearing overhangs, but not blunt ended duplex DNA, and cleaves in a 3'-5' direction. Essential for the formation of DNA replication focal centers. Has an important role in maintaining genome stability. This is 3'-5' exonuclease from Drosophila willistoni (Fruit fly).